The primary structure comprises 203 residues: Endo-type membrane-bound lytic murein transglycosylase A (203 aa).

The N-terminal stretch at 1–15 is a signal peptide; sequence MKLRWFAFLIVLLAG. C16 carries N-palmitoyl cysteine lipidation. The S-diacylglycerol cysteine moiety is linked to residue C16.

The protein belongs to the transglycosylase Slt family.

Its subcellular location is the cell outer membrane. It carries out the reaction Endolytic cleavage of the (1-&gt;4)-beta-glycosidic linkage between N-acetylmuramic acid (MurNAc) and N-acetylglucosamine (GlcNAc) residues in peptidoglycan with concomitant formation of a 1,6-anhydrobond in the MurNAc residue.. Functionally, murein-degrading enzyme. May play a role in recycling of muropeptides during cell elongation and/or cell division. Preferentially cleaves at a distance of more than two disaccharide units from the ends of the glycan chain. The sequence is that of Endo-type membrane-bound lytic murein transglycosylase A from Escherichia coli O127:H6 (strain E2348/69 / EPEC).